Here is a 456-residue protein sequence, read N- to C-terminus: Trigger factor (456 aa).

The 86-residue stretch at 192 to 277 (GDTVVIDFVG…IHEVKTKEVP (86 aa)) folds into the PPIase FKBP-type domain.

Belongs to the FKBP-type PPIase family. Tig subfamily.

It is found in the cytoplasm. The enzyme catalyses [protein]-peptidylproline (omega=180) = [protein]-peptidylproline (omega=0). In terms of biological role, involved in protein export. Acts as a chaperone by maintaining the newly synthesized protein in an open conformation. Functions as a peptidyl-prolyl cis-trans isomerase. The sequence is that of Trigger factor from Streptococcus pyogenes serotype M12 (strain MGAS9429).